The chain runs to 199 residues: Probable GTP-binding protein EngB (199 aa).

The EngB-type G domain maps to 22–195 (QLPEIALSGR…WEWIEQQCDI (174 aa)). GTP is bound by residues 30–37 (GRSNVGKS), 57–61 (GKTQT), 75–78 (DVPG), 142–145 (TKMD), and 174–176 (FSA). Mg(2+)-binding residues include Ser37 and Thr59.

This sequence belongs to the TRAFAC class TrmE-Era-EngA-EngB-Septin-like GTPase superfamily. EngB GTPase family. Mg(2+) serves as cofactor.

Its function is as follows. Necessary for normal cell division and for the maintenance of normal septation. The polypeptide is Probable GTP-binding protein EngB (Latilactobacillus sakei subsp. sakei (strain 23K) (Lactobacillus sakei subsp. sakei)).